The sequence spans 111 residues: uncharacterized protein (111 aa).

A helical transmembrane segment spans residues 27-47 (HLFHFPSISFFFFFFFFFFSF).

It is found in the membrane. This is an uncharacterized protein from Saccharomyces cerevisiae (strain ATCC 204508 / S288c) (Baker's yeast).